The chain runs to 529 residues: uncharacterized protein (529 aa).

Residues 354–373 (FHVASFPWISWAILGSYIML) traverse the membrane as a helical segment.

It is found in the host membrane. This is an uncharacterized protein from Acidianus convivator (ATV).